Reading from the N-terminus, the 880-residue chain is MNSSEIRKRYLEFFAARGHRVIPSASLIPGNDPTLLWTSAGMVPFKPYFTGVATPEFRRVVTCQKCLRTPDIEMVGRTARHHTFFEMLGNFSFGDYFKERAIPWAWEFVTRDLGLAPEHLWISVYLDDNEAFDHWRGLGVPAERIVRLGRDTNFWEIGVGPCGPCSEVYYDRGPAYGCESASCGPGCDCDRWLEIWNLVFIQYFRNEAGDYSPLESPGIDTGMGLERVASVLQGVNTNFDTDLFRGLIDYTAGVLGVRYGDDPAGDAALKVIADHGRAITFAIADGVLPSNEGRGYVIRRLLRRAVRKALLLGREKPFLEGVALAVIEQMAGAYPELETARDSVRKVVRFEEERFRQTLTQGNEIIGRLIAEARAEKRSTLEGAAAFQLYDTYGFPLELTREICAEQGLAVDEAGFEAALKAQQQKARSSRRETRYVEERETFFRNLRDEIGLTRFVGYEQLEADAGVRALIRDGQRVPAAGSGEQVSLVVDTTPCYAESGGQVGDHGLIEGENVRGRITDTFAPVEGLHVHEVVVEAGVLEEGARIRILVDGSRRRKICRNHTATHLLHRTLKAVLGTHVNQAGSLVAPERLRFDFTHIQPLSEAELAEVESRINEIVLSNLRVESFQTSFDRARELGAVALFGEKYGDLVRVVQIDGVSMELCGGTHVLSTAEIGPVKITAESSVGAGLRRLEAVTGMEALAFLNSRNEQLHRIAQAVRVPVSELVVHVERLLDHQKKLQRENEQLQDRLQVYEVKELLDRASTHEGVRILATSVRARDMAELRSMLDLLRERLGSAVIVLGSAVNGKVSLVASVSRDLVARGLHAGAIIKEAAAVAGGGGGGRPEMAQAGGKNPEKLTEALEKARQVVLRRVDGGSA.

Zn(2+) is bound by residues His-563, His-567, Cys-665, and His-669.

The protein belongs to the class-II aminoacyl-tRNA synthetase family. Requires Zn(2+) as cofactor.

Its subcellular location is the cytoplasm. It carries out the reaction tRNA(Ala) + L-alanine + ATP = L-alanyl-tRNA(Ala) + AMP + diphosphate. Functionally, catalyzes the attachment of alanine to tRNA(Ala) in a two-step reaction: alanine is first activated by ATP to form Ala-AMP and then transferred to the acceptor end of tRNA(Ala). Also edits incorrectly charged Ser-tRNA(Ala) and Gly-tRNA(Ala) via its editing domain. This chain is Alanine--tRNA ligase, found in Desulforudis audaxviator (strain MP104C).